The following is a 458-amino-acid chain: Ribulose bisphosphate carboxylase large chain (458 aa).

Residue K7 is modified to N6,N6,N6-trimethyllysine. Residues N116 and T166 each coordinate substrate. K168 (proton acceptor) is an active-site residue. K170 serves as a coordination point for substrate. Mg(2+)-binding residues include K194, D196, and E197. Residue K194 is modified to N6-carboxylysine. Residue H287 is the Proton acceptor of the active site. Positions 288, 320, and 372 each coordinate substrate.

This sequence belongs to the RuBisCO large chain family. Type I subfamily. Heterohexadecamer of 8 large chains and 8 small chains; disulfide-linked. The disulfide link is formed within the large subunit homodimers. Requires Mg(2+) as cofactor. In terms of processing, the disulfide bond which can form in the large chain dimeric partners within the hexadecamer appears to be associated with oxidative stress and protein turnover.

The protein localises to the plastid. It is found in the chloroplast. The enzyme catalyses 2 (2R)-3-phosphoglycerate + 2 H(+) = D-ribulose 1,5-bisphosphate + CO2 + H2O. The catalysed reaction is D-ribulose 1,5-bisphosphate + O2 = 2-phosphoglycolate + (2R)-3-phosphoglycerate + 2 H(+). RuBisCO catalyzes two reactions: the carboxylation of D-ribulose 1,5-bisphosphate, the primary event in carbon dioxide fixation, as well as the oxidative fragmentation of the pentose substrate in the photorespiration process. Both reactions occur simultaneously and in competition at the same active site. The chain is Ribulose bisphosphate carboxylase large chain from Gladiolus gueinzii (Coastal gladiolus).